The primary structure comprises 265 residues: Hydroxyethylthiazole kinase 2 (265 aa).

Met-39 lines the substrate pocket. Residues Lys-115 and Thr-168 each contribute to the ATP site. Residue Gly-195 coordinates substrate.

It belongs to the Thz kinase family. Requires Mg(2+) as cofactor.

It carries out the reaction 5-(2-hydroxyethyl)-4-methylthiazole + ATP = 4-methyl-5-(2-phosphooxyethyl)-thiazole + ADP + H(+). It functions in the pathway cofactor biosynthesis; thiamine diphosphate biosynthesis; 4-methyl-5-(2-phosphoethyl)-thiazole from 5-(2-hydroxyethyl)-4-methylthiazole: step 1/1. In terms of biological role, catalyzes the phosphorylation of the hydroxyl group of 4-methyl-5-beta-hydroxyethylthiazole (THZ). The protein is Hydroxyethylthiazole kinase 2 of Clostridium botulinum (strain 657 / Type Ba4).